The sequence spans 513 residues: ATP synthase subunit alpha (513 aa).

ATP is bound at residue 169–176 (GDRQTGKT).

The protein belongs to the ATPase alpha/beta chains family. As to quaternary structure, F-type ATPases have 2 components, CF(1) - the catalytic core - and CF(0) - the membrane proton channel. CF(1) has five subunits: alpha(3), beta(3), gamma(1), delta(1), epsilon(1). CF(0) has three main subunits: a(1), b(2) and c(9-12). The alpha and beta chains form an alternating ring which encloses part of the gamma chain. CF(1) is attached to CF(0) by a central stalk formed by the gamma and epsilon chains, while a peripheral stalk is formed by the delta and b chains.

The protein resides in the cell inner membrane. The enzyme catalyses ATP + H2O + 4 H(+)(in) = ADP + phosphate + 5 H(+)(out). Functionally, produces ATP from ADP in the presence of a proton gradient across the membrane. The alpha chain is a regulatory subunit. The chain is ATP synthase subunit alpha from Ralstonia pickettii (strain 12J).